Consider the following 23-residue polypeptide: Acidic phospholipase A2 Ts-A5 (23 aa).

Ca(2+) is required as a cofactor. Contains 7 disulfide bonds. As to expression, expressed by the venom gland.

The protein localises to the secreted. It catalyses the reaction a 1,2-diacyl-sn-glycero-3-phosphocholine + H2O = a 1-acyl-sn-glycero-3-phosphocholine + a fatty acid + H(+). In terms of biological role, snake venom phospholipase A2 (PLA2) that shows a moderate inhibition of ADP-induced human platelet aggregation when tested on platelet rich plasma. Exhibits high hydrolytic activities and prefers the anionic micelles (dPPC with deoxycholate) to the zwitterionic micelles (dPPC with Triton X-100). PLA2 catalyzes the calcium-dependent hydrolysis of the 2-acyl groups in 3-sn-phosphoglycerides. This Trimeresurus stejnegeri (Chinese green tree viper) protein is Acidic phospholipase A2 Ts-A5.